The primary structure comprises 344 residues: NAD-dependent alcohol dehydrogenase (344 aa).

The Zn(2+) site is built by cysteine 38, histidine 66, aspartate 96, cysteine 99, cysteine 102, cysteine 110, and cysteine 152.

Belongs to the zinc-containing alcohol dehydrogenase family. Homodimer and homotetramer. Requires Zn(2+) as cofactor.

It carries out the reaction a primary alcohol + NAD(+) = an aldehyde + NADH + H(+). The enzyme catalyses a secondary alcohol + NAD(+) = a ketone + NADH + H(+). This Sulfolobus acidocaldarius (strain ATCC 33909 / DSM 639 / JCM 8929 / NBRC 15157 / NCIMB 11770) protein is NAD-dependent alcohol dehydrogenase (adh).